The chain runs to 792 residues: Starch synthase 2, chloroplastic/amyloplastic (792 aa).

Residues 1-55 (MASVAESSFPLLCQIKTQRRINSSTLRHSRVSYHDLPSGSLSFRSRSFVLGHRCK) constitute a chloroplast transit peptide. Positions 105–295 (IKESTPDLDD…GKDEEKPPPL (191 aa)) are disordered. Residues 145 to 156 (GSVSPSTYGKSS) show a composition bias toward polar residues. Residues 179–192 (SSASVISSSPVTSP) show a composition bias toward low complexity. Polar residues predominate over residues 221–233 (SVMTSPEKTSDPV). The span at 266–275 (KTEKYVEKTP) shows a compositional bias: basic and acidic residues. Lys315 provides a ligand contact to ADP-alpha-D-glucose.

This sequence belongs to the glycosyltransferase 1 family. Bacterial/plant glycogen synthase subfamily. As to expression, expressed in roots, leaves and flowers.

Its subcellular location is the plastid. The protein localises to the chloroplast. It is found in the amyloplast. It catalyses the reaction [(1-&gt;4)-alpha-D-glucosyl](n) + ADP-alpha-D-glucose = [(1-&gt;4)-alpha-D-glucosyl](n+1) + ADP + H(+). It functions in the pathway glycan biosynthesis; starch biosynthesis. Its function is as follows. Involved in the synthesis of glycan chains within amylopectin in leaves. Is required to produce chains with a degree of polymerization of 12 to 25 (DP12-DP25). In Arabidopsis thaliana (Mouse-ear cress), this protein is Starch synthase 2, chloroplastic/amyloplastic (SS2).